The sequence spans 198 residues: A-type ATP synthase subunit E (198 aa).

Belongs to the V-ATPase E subunit family. Has multiple subunits with at least A(3), B(3), C, D, E, F, H, I and proteolipid K(x).

The protein resides in the cell membrane. Component of the A-type ATP synthase that produces ATP from ADP in the presence of a proton gradient across the membrane. The polypeptide is A-type ATP synthase subunit E (Pyrococcus horikoshii (strain ATCC 700860 / DSM 12428 / JCM 9974 / NBRC 100139 / OT-3)).